The primary structure comprises 347 residues: SCA7 domain-containing protein SELMODRAFT_439258 (347 aa).

The signal sequence occupies residues M1–A13. The interval R77–P106 is disordered. The region spanning Q134–D201 is the SCA7 domain.

The protein is SCA7 domain-containing protein SELMODRAFT_439258 of Selaginella moellendorffii (Spikemoss).